A 480-amino-acid polypeptide reads, in one-letter code: Probable tRNA N6-adenosine threonylcarbamoyltransferase, mitochondrial (480 aa).

A mitochondrion-targeting transit peptide spans 1-86 (MVRLFLTLSP…NPNFDDNLVV (86 aa)). The a divalent metal cation site is built by His-194 and His-198. Substrate-binding positions include 217 to 221 (LISGG), Asp-250, Gly-265, Glu-269, 373 to 374 (SN), and Thr-401. Position 402 (Asp-402) interacts with a divalent metal cation.

This sequence belongs to the KAE1 / TsaD family. As to quaternary structure, homodimer. It depends on a divalent metal cation as a cofactor. In terms of tissue distribution, expressed in young developing leaves, roots, flowers and siliques.

The protein resides in the mitochondrion inner membrane. It catalyses the reaction L-threonylcarbamoyladenylate + adenosine(37) in tRNA = N(6)-L-threonylcarbamoyladenosine(37) in tRNA + AMP + H(+). Required for the formation of a threonylcarbamoyl group on adenosine at position 37 (t(6)A37) in mitochondrial tRNAs that read codons beginning with adenine. Probably involved in the transfer of the threonylcarbamoyl moiety of threonylcarbamoyl-AMP (TC-AMP) to the N6 group of A37. Involved in mitochondrial genome maintenance. May have a role in embryonic development in plants. The polypeptide is Probable tRNA N6-adenosine threonylcarbamoyltransferase, mitochondrial (Arabidopsis thaliana (Mouse-ear cress)).